Reading from the N-terminus, the 113-residue chain is Histone H2B (113 aa).

Positions 1 to 21 are disordered; that stretch reads MPATPAKRAKRVQQEKRHHKK. Residues 7 to 21 show a composition bias toward basic residues; that stretch reads KRAKRVQQEKRHHKK. Lys109 participates in a covalent cross-link: Glycyl lysine isopeptide (Lys-Gly) (interchain with G-Cter in ubiquitin).

It belongs to the histone H2B family. As to quaternary structure, the nucleosome is a histone octamer containing two molecules each of H2A, H2B, H3 and H4 assembled in one H3-H4 heterotetramer and two H2A-H2B heterodimers. The octamer wraps approximately 147 bp of DNA. Post-translationally, monoubiquitination of Lys-109 gives a specific tag for epigenetic transcriptional activation and is also prerequisite for histone H3 'Lys-4' and 'Lys-79' methylation.

The protein resides in the nucleus. The protein localises to the chromosome. In terms of biological role, core component of nucleosome. Nucleosomes wrap and compact DNA into chromatin, limiting DNA accessibility to the cellular machineries which require DNA as a template. Histones thereby play a central role in transcription regulation, DNA repair, DNA replication and chromosomal stability. DNA accessibility is regulated via a complex set of post-translational modifications of histones, also called histone code, and nucleosome remodeling. The polypeptide is Histone H2B (H2B1) (Euplotes crassus).